A 536-amino-acid polypeptide reads, in one-letter code: Lysosomal acid glucosylceramidase (536 aa).

Positions 1–39 are cleaved as a signal peptide; the sequence is MEFSSPSREECPKPLSRVSIMAGSLTGLLLLQAVSWASG. Intrachain disulfides connect C43–C55 and C57–C62. 3 N-linked (GlcNAc...) asparagine glycosylation sites follow: N58, N98, and N185. Residue E274 is the Proton donor of the active site. N309 carries an N-linked (GlcNAc...) asparagine glycan. The Nucleophile role is filled by E379. Residue N501 is glycosylated (N-linked (GlcNAc...) asparagine).

Belongs to the glycosyl hydrolase 30 family. In terms of assembly, interacts with saposin-C. Interacts with SCARB2. Interacts with TCP1. May interacts with SNCA; this interaction may inhibit the glucosylceramidase activity. Interacts with GRN; this interaction prevents aggregation of GBA1-SCARB2 complex via interaction with HSPA1A upon stress.

Its subcellular location is the lysosome membrane. The catalysed reaction is a beta-D-glucosyl-(1&lt;-&gt;1')-N-acylsphing-4-enine + H2O = an N-acylsphing-4-enine + D-glucose. The enzyme catalyses a beta-D-galactosyl-(1&lt;-&gt;1')-N-acylsphing-4-enine + H2O = an N-acylsphing-4-enine + D-galactose. It carries out the reaction cholesteryl 3-beta-D-glucoside + H2O = cholesterol + D-glucose. It catalyses the reaction a beta-D-glucosyl-(1&lt;-&gt;1')-N-acylsphing-4-enine + cholesterol = cholesteryl 3-beta-D-glucoside + an N-acylsphing-4-enine. The catalysed reaction is beta-D-glucosyl-N-(9Z-octadecenoyl)-sphing-4E-enine + cholesterol = N-(9Z-octadecenoyl)-sphing-4-enine + cholesteryl 3-beta-D-glucoside. The enzyme catalyses beta-D-glucosyl-(1&lt;-&gt;1')-N-hexadecanoylsphing-4-enine + cholesterol = cholesteryl 3-beta-D-glucoside + N-hexadecanoylsphing-4-enine. It carries out the reaction beta-D-glucosyl-N-octanoylsphing-4E-enine + cholesterol = N-octanoylsphing-4-enine + cholesteryl 3-beta-D-glucoside. It catalyses the reaction beta-D-glucosyl-N-dodecanoylsphing-4-enine + cholesterol = N-dodecanoylsphing-4-enine + cholesteryl 3-beta-D-glucoside. The catalysed reaction is beta-D-glucosyl-(1&lt;-&gt;1)-N-octadecanoylsphing-4-enine + cholesterol = N-octadecanoylsphing-4-enine + cholesteryl 3-beta-D-glucoside. The enzyme catalyses beta-D-glucosyl-(1&lt;-&gt;1')-N-(15Z-tetracosenoyl)-sphing-4-enine + cholesterol = N-(15Z-tetracosenoyl)-sphing-4-enine + cholesteryl 3-beta-D-glucoside. It carries out the reaction a beta-D-galactosyl-(1&lt;-&gt;1')-N-acylsphing-4-enine + cholesterol = cholesteryl 3-beta-D-galactoside + an N-acylsphing-4-enine. It catalyses the reaction 1-(beta-D-galactosyl)-N-dodecanoylsphing-4-enine + cholesterol = cholesteryl 3-beta-D-galactoside + N-dodecanoylsphing-4-enine. The catalysed reaction is a beta-D-xylosyl-(1&lt;-&gt;1')-N-acylsphing-4-enine + cholesterol = cholesteryl 3-beta-D-xyloside + an N-acylsphing-4-enine. The enzyme catalyses beta-D-xylosyl-(1&lt;-&gt;1')-N-(9Z-octadecenoyl)-sphing-4-enine + cholesterol = cholesteryl 3-beta-D-xyloside + N-(9Z-octadecenoyl)-sphing-4-enine. It functions in the pathway steroid metabolism; cholesterol metabolism. Its pathway is sphingolipid metabolism. Its activity is regulated as follows. Synergistically activated by saposin-A and saposin-C, two saposin peptides produced by proteolytic processing of prosaposin/PSAP. Saposin-C activates GBA1 through its recruitment to membranes. The membrane structure and composition in anionic phospholipids are also important for the activation. Activated by PKC in the salvage pathway of ceramide formation. Inhibited by conduritol B epoxide/CBE. Glucosylceramidase that catalyzes, within the lysosomal compartment, the hydrolysis of glucosylceramides/GlcCers (such as beta-D-glucosyl-(1&lt;-&gt;1')-N-acylsphing-4-enine) into free ceramides (such as N-acylsphing-4-enine) and glucose. Plays a central role in the degradation of complex lipids and the turnover of cellular membranes. Through the production of ceramides, participates in the PKC-activated salvage pathway of ceramide formation. Catalyzes the glucosylation of cholesterol, through a transglucosylation reaction where glucose is transferred from GlcCer to cholesterol. GlcCer containing mono-unsaturated fatty acids (such as beta-D-glucosyl-N-(9Z-octadecenoyl)-sphing-4-enine) are preferred as glucose donors for cholesterol glucosylation when compared with GlcCer containing same chain length of saturated fatty acids (such as beta-D-glucosyl-N-octadecanoyl-sphing-4-enine). Under specific conditions, may alternatively catalyze the reverse reaction, transferring glucose from cholesteryl 3-beta-D-glucoside to ceramide. Can also hydrolyze cholesteryl 3-beta-D-glucoside producing glucose and cholesterol. Catalyzes the hydrolysis of galactosylceramides/GalCers (such as beta-D-galactosyl-(1&lt;-&gt;1')-N-acylsphing-4-enine), as well as the transfer of galactose between GalCers and cholesterol in vitro, but with lower activity than with GlcCers. Contrary to GlcCer and GalCer, xylosylceramide/XylCer (such as beta-D-xyosyl-(1&lt;-&gt;1')-N-acylsphing-4-enine) is not a good substrate for hydrolysis, however it is a good xylose donor for transxylosylation activity to form cholesteryl 3-beta-D-xyloside. This chain is Lysosomal acid glucosylceramidase, found in Homo sapiens (Human).